The following is a 584-amino-acid chain: Proline--tRNA ligase (584 aa).

Residues 242 to 261 (APPASNPEERPATQVHDTPD) are disordered.

This sequence belongs to the class-II aminoacyl-tRNA synthetase family. ProS type 1 subfamily. In terms of assembly, homodimer.

It is found in the cytoplasm. The catalysed reaction is tRNA(Pro) + L-proline + ATP = L-prolyl-tRNA(Pro) + AMP + diphosphate. Catalyzes the attachment of proline to tRNA(Pro) in a two-step reaction: proline is first activated by ATP to form Pro-AMP and then transferred to the acceptor end of tRNA(Pro). As ProRS can inadvertently accommodate and process non-cognate amino acids such as alanine and cysteine, to avoid such errors it has two additional distinct editing activities against alanine. One activity is designated as 'pretransfer' editing and involves the tRNA(Pro)-independent hydrolysis of activated Ala-AMP. The other activity is designated 'posttransfer' editing and involves deacylation of mischarged Ala-tRNA(Pro). The misacylated Cys-tRNA(Pro) is not edited by ProRS. The polypeptide is Proline--tRNA ligase (Salinispora arenicola (strain CNS-205)).